The sequence spans 139 residues: Acidic phospholipase A2 H1E6 (139 aa).

An N-terminal signal peptide occupies residues 1 to 16 (MRTLWILAVLQVGVEG). 7 disulfide bridges follow: Cys-42-Cys-132, Cys-44-Cys-60, Cys-59-Cys-111, Cys-65-Cys-139, Cys-66-Cys-104, Cys-73-Cys-97, and Cys-91-Cys-102. The Ca(2+) site is built by Tyr-43, Gly-45, and Gly-47. His-63 is a catalytic residue. Asp-64 serves as a coordination point for Ca(2+). The active site involves Asp-105.

Homodimer. Ca(2+) is required as a cofactor. Expressed by the venom gland.

It is found in the secreted. It carries out the reaction a 1,2-diacyl-sn-glycero-3-phosphocholine + H2O = a 1-acyl-sn-glycero-3-phosphocholine + a fatty acid + H(+). Functionally, snake venom phospholipase A2 (PLA2) that inhibits ADP-induced platelet aggregation. PLA2 catalyzes the calcium-dependent hydrolysis of the 2-acyl groups in 3-sn-phosphoglycerides. The polypeptide is Acidic phospholipase A2 H1E6 (Calloselasma rhodostoma (Malayan pit viper)).